We begin with the raw amino-acid sequence, 273 residues long: MIRVAVTGCAGNMGSKIIKTVQAQDNMEVVMGIEMPNSPLAGNDLGQQIGLGPMGVEIIGSQDLKTELEKVKPDVLVDFTIAKAAVETVKICAECGVNVVVGTTGLNDEQLDVMHKAIKDNDIKAVISPNMATGVNVFFEIVGQVAKILGNEYDVEIVEAHHHNKQDAPSGTAKRAAEIVAENLNLDLKEKACYGREGMVGKRPENEIGIHAVRGGDIVGDHTVMFCGDGERIEVIHRASTRQAFVNGVIRAINYQSSKQDKNIADMFDVLGL.

NAD(+) contacts are provided by residues 8-13 (GCAGNM), Glu34, 102-104 (GTT), and 128-131 (SPNM). Catalysis depends on His161, which acts as the Proton donor/acceptor. Residue His162 participates in (S)-2,3,4,5-tetrahydrodipicolinate binding. The active-site Proton donor is the Lys165. 171 to 172 (GT) contributes to the (S)-2,3,4,5-tetrahydrodipicolinate binding site.

It belongs to the DapB family.

It localises to the cytoplasm. It catalyses the reaction (S)-2,3,4,5-tetrahydrodipicolinate + NAD(+) + H2O = (2S,4S)-4-hydroxy-2,3,4,5-tetrahydrodipicolinate + NADH + H(+). The catalysed reaction is (S)-2,3,4,5-tetrahydrodipicolinate + NADP(+) + H2O = (2S,4S)-4-hydroxy-2,3,4,5-tetrahydrodipicolinate + NADPH + H(+). Its pathway is amino-acid biosynthesis; L-lysine biosynthesis via DAP pathway; (S)-tetrahydrodipicolinate from L-aspartate: step 4/4. Its function is as follows. Catalyzes the conversion of 4-hydroxy-tetrahydrodipicolinate (HTPA) to tetrahydrodipicolinate. The chain is 4-hydroxy-tetrahydrodipicolinate reductase from Methanosphaera stadtmanae (strain ATCC 43021 / DSM 3091 / JCM 11832 / MCB-3).